The chain runs to 292 residues: tRNA pseudouridine synthase B (292 aa).

The Nucleophile role is filled by Asp38.

The protein belongs to the pseudouridine synthase TruB family. Type 1 subfamily.

It catalyses the reaction uridine(55) in tRNA = pseudouridine(55) in tRNA. Responsible for synthesis of pseudouridine from uracil-55 in the psi GC loop of transfer RNAs. The polypeptide is tRNA pseudouridine synthase B (Gloeobacter violaceus (strain ATCC 29082 / PCC 7421)).